The primary structure comprises 391 residues: MSRFLICSFALVLLYPAGIDMYLVGLPRIAADLNASEAQLHIAFSVYLAGMAAAMLFAGKVADRSGRKPVAIPGAALFIIASVFCSLAETSALFLAGRFLQGLGAGCCYVVAFAILRDTLDDRRRAKVLSLLNGITCIIPVLAPVLGHLIMLKFPWQSLFWTMATMGIAVLMLSLFILKETRPAAPAASDKPRENSESLLNRFFLSRVVITTLSVSVILTFVNTSPVLLMEIMGFERGEYATIMALTAGVSMTVSFSTPFALGIFKPRTLMITSQVLFLAAGITLAVSPSHAVSLFGITLICAGFSVGFGVAMSQALGPFSLRAGVASSTLGIAQVCGSSLWIWLAAVVGIGAWNMLIGILIACSIVSLLLIMFVAPGRPVAAHEEIHHHA.

Over methionine 1–arginine 3 the chain is Cytoplasmic. The chain crosses the membrane as a helical span at residues phenylalanine 4 to valine 24. Residues glycine 25–histidine 41 are Periplasmic-facing. A helical membrane pass occupies residues isoleucine 42 to alanine 62. The Cytoplasmic portion of the chain corresponds to aspartate 63–lysine 68. A helical membrane pass occupies residues proline 69 to glutamate 89. The Periplasmic segment spans residues threonine 90 to alanine 92. Residues leucine 93–phenylalanine 113 form a helical membrane-spanning segment. Topologically, residues alanine 114–serine 130 are cytoplasmic. The chain crosses the membrane as a helical span at residues leucine 131–methionine 151. Residues leucine 152–glutamine 157 are Periplasmic-facing. Residues serine 158–leucine 178 form a helical membrane-spanning segment. At lysine 179 to arginine 202 the chain is on the cytoplasmic side. Residues phenylalanine 203–valine 222 form a helical membrane-spanning segment. Topologically, residues asparagine 223 to methionine 244 are periplasmic. The chain crosses the membrane as a helical span at residues alanine 245–phenylalanine 265. The Cytoplasmic portion of the chain corresponds to lysine 266–arginine 268. Residues threonine 269–proline 289 traverse the membrane as a helical segment. Over serine 290–alanine 292 the chain is Periplasmic. Residues valine 293–methionine 313 traverse the membrane as a helical segment. At serine 314–threonine 330 the chain is on the cytoplasmic side. A helical membrane pass occupies residues leucine 331–isoleucine 351. The Periplasmic portion of the chain corresponds to glycine 352–asparagine 355. Residues methionine 356–alanine 376 traverse the membrane as a helical segment. Residues proline 377–alanine 391 lie on the Cytoplasmic side of the membrane.

It belongs to the major facilitator superfamily. DHA1 family. MdtL (TC 2.A.1.2.22) subfamily.

Its subcellular location is the cell inner membrane. In terms of biological role, confers resistance to chloramphenicol. This Escherichia coli O6:K15:H31 (strain 536 / UPEC) protein is Multidrug resistance protein MdtL.